The following is a 1363-amino-acid chain: Spike glycoprotein (1363 aa).

The N-terminal stretch at 1–13 is a signal peptide; the sequence is MFLILLISLPMAF. The Extracellular segment spans residues 14-1307; sequence AVIGDLKCTT…GTYEYYVKWP (1294 aa). In terms of domain architecture, BetaCoV S1-NTD spans 15–298; sequence VIGDLKCTTV…DFMSEIKCKT (284 aa). 5 disulfides stabilise this stretch: C21–C165, C160–C193, C172–C252, C286–C296, and C331–C356. N-linked (GlcNAc...) asparagine; by host glycans are attached at residues N59 and N133. The N-linked (GlcNAc...) asparagine; by host glycan is linked to N198. Residues 329–617 form the BetaCoV S1-CTD domain; that stretch reads PDCNIEAWLN…DVNSGTTCST (289 aa). N359 carries N-linked (GlcNAc...) asparagine; by host glycosylation. 2 disulfide bridges follow: C374–C427 and C386–C615. N-linked (GlcNAc...) asparagine; by host glycosylation is found at N437, N649, N676, N696, N714, N739, and N788. 2 fusion peptide regions span residues 914 to 935 and 933 to 953; these read SAIE…VEAY and EAYN…VQSY. N-linked (GlcNAc...) asparagine; by host glycosylation is present at N937. C938 and C949 are oxidised to a cystine. The heptad repeat 1 stretch occupies residues 1014 to 1064; that stretch reads QKLIANAFNNALDAIQEGFDATNSALVKIQAVVNANAEALNNLLQQLSNRF. Residues 1043-1087 adopt a coiled-coil conformation; that stretch reads QAVVNANAEALNNLLQQLSNRFGAISSSLQEILSRLDALEAQAQI. N1194, N1224, N1234, N1253, N1267, and N1288 each carry an N-linked (GlcNAc...) asparagine; by host glycan. Positions 1258–1296 are heptad repeat 2; that stretch reads APDLSLDYINVTFLDLQDEMNRLQEAIKVLNQSYINLKD. Positions 1269–1297 form a coiled coil; that stretch reads TFLDLQDEMNRLQEAIKVLNQSYINLKDI. The chain crosses the membrane as a helical span at residues 1308-1328; sequence WYVWLLIGFAGVAMLVLLFFI. Topologically, residues 1329-1363 are cytoplasmic; that stretch reads CCCTGCGTSCFKICGGCCDDYTGHQELVIKTSHDD. The KxHxx signature appears at 1359–1363; it reads TSHDD.

This sequence belongs to the betacoronaviruses spike protein family. As to quaternary structure, homotrimer; each monomer consists of a S1 and a S2 subunit. The resulting peplomers protrude from the virus surface as spikes. Post-translationally, specific enzymatic cleavages in vivo yield mature proteins. The precursor is processed into S1 and S2 by host cell furin or another cellular protease to yield the mature S1 and S2 proteins. Additionally, a second cleavage leads to the release of a fusion peptide after viral attachment to host cell receptor. In terms of processing, the cytoplasmic Cys-rich domain is palmitoylated. Spike glycoprotein is digested within host endosomes.

It is found in the virion membrane. The protein localises to the host endoplasmic reticulum-Golgi intermediate compartment membrane. The protein resides in the host cell membrane. Functionally, attaches the virion to the cell membrane by interacting with host receptor, initiating the infection. In terms of biological role, mediates fusion of the virion and cellular membranes by acting as a class I viral fusion protein. Under the current model, the protein has at least three conformational states: pre-fusion native state, pre-hairpin intermediate state, and post-fusion hairpin state. During viral and target cell membrane fusion, the coiled coil regions (heptad repeats) assume a trimer-of-hairpins structure, positioning the fusion peptide in close proximity to the C-terminal region of the ectodomain. The formation of this structure appears to drive apposition and subsequent fusion of viral and target cell membranes. Its function is as follows. Acts as a viral fusion peptide which is unmasked following S2 cleavage occurring upon virus endocytosis. This Bovine coronavirus (strain vaccine) (BCoV) protein is Spike glycoprotein.